Consider the following 120-residue polypeptide: NAD(P)H-quinone oxidoreductase subunit 3 (120 aa).

3 consecutive transmembrane segments (helical) span residues 1-21, 64-84, and 89-109; these read MFVLSGYEYLLGFFIICSLVP, MFALVFVVFDVETVFLYPWAV, and LGLLAFIEALVFIAILVVALV.

The protein belongs to the complex I subunit 3 family. In terms of assembly, NDH-1 can be composed of about 15 different subunits; different subcomplexes with different compositions have been identified which probably have different functions.

The protein localises to the cellular thylakoid membrane. It catalyses the reaction a plastoquinone + NADH + (n+1) H(+)(in) = a plastoquinol + NAD(+) + n H(+)(out). The enzyme catalyses a plastoquinone + NADPH + (n+1) H(+)(in) = a plastoquinol + NADP(+) + n H(+)(out). Its function is as follows. NDH-1 shuttles electrons from an unknown electron donor, via FMN and iron-sulfur (Fe-S) centers, to quinones in the respiratory and/or the photosynthetic chain. The immediate electron acceptor for the enzyme in this species is believed to be plastoquinone. Couples the redox reaction to proton translocation, and thus conserves the redox energy in a proton gradient. Cyanobacterial NDH-1 also plays a role in inorganic carbon-concentration. The sequence is that of NAD(P)H-quinone oxidoreductase subunit 3 from Nostoc punctiforme (strain ATCC 29133 / PCC 73102).